The primary structure comprises 219 residues: Proteasome subunit beta type-9 (219 aa).

A propeptide spans 1–20 (MLRAGAPTAGSFRTEEVHTG) (removed in mature form). Residue threonine 21 is the Nucleophile of the active site. An N6-acetyllysine mark is found at lysine 53 and lysine 109.

This sequence belongs to the peptidase T1B family. In terms of assembly, the 26S proteasome consists of a 20S proteasome core and two 19S regulatory subunits. The 20S proteasome core is composed of 28 subunits that are arranged in four stacked rings, resulting in a barrel-shaped structure. The two end rings are each formed by seven alpha subunits, and the two central rings are each formed by seven beta subunits. The catalytic chamber with the active sites is on the inside of the barrel. Component of the immunoproteasome, where it displaces the equivalent housekeeping subunit PSMB6. Component of the spermatoproteasome, a form of the proteasome specifically found in testis. Post-translationally, autocleaved. The resulting N-terminal Thr residue of the mature subunit is responsible for the nucleophile proteolytic activity.

Its subcellular location is the cytoplasm. It localises to the nucleus. It carries out the reaction Cleavage of peptide bonds with very broad specificity.. Its function is as follows. The proteasome is a multicatalytic proteinase complex which is characterized by its ability to cleave peptides with Arg, Phe, Tyr, Leu, and Glu adjacent to the leaving group at neutral or slightly basic pH. The proteasome has an ATP-dependent proteolytic activity. This subunit is involved in antigen processing to generate class I binding peptides. The sequence is that of Proteasome subunit beta type-9 (Psmb9) from Mus musculus bactrianus (Southwestern Asian house mouse).